Reading from the N-terminus, the 689-residue chain is Quinidine resistance protein 3 (689 aa).

The segment covering 1-24 (MQAQGSQSNVGSLRSNCSDNSLPN) has biased composition (polar residues). Positions 1 to 73 (MQAQGSQSNV…DNQLSRLKSE (73 aa)) are disordered. Over 1–108 (MQAQGSQSNV…RDYPPMMKKM (108 aa)) the chain is Extracellular. 2 stretches are compositionally biased toward basic and acidic residues: residues 29-51 (MHCD…EKTN) and 59-73 (SREH…LKSE). A helical transmembrane segment spans residues 109 to 131 (IVFLIAFSSMMGPMGTSIIFPAI). Residues 132 to 139 (NSITTEFK) are Cytoplasmic-facing. Residues 140–163 (TSVIMVNVSIGVYLLSLGVFPLWW) form a helical membrane-spanning segment. The Extracellular segment spans residues 164-175 (SSLSELEGRRTT). Residues 176–193 (YITSFALLFAFNIGSALA) traverse the membrane as a helical segment. Residues 194-235 (PDINSFIALRMLCGAASASVQSVGAGTVADLYISEDRGKNLS) lie on the Cytoplasmic side of the membrane. The helical transmembrane segment at 236–256 (YYYLGPLLAPLLSPIFGSLLV) threads the bilayer. The Extracellular portion of the chain corresponds to 257–265 (NRWPWRSTQ). The chain crosses the membrane as a helical span at residues 266–283 (WFMVILSGCNVILLTVLL). At 284 to 475 (PETLRKQDSK…KSLHFLEYPP (192 aa)) the chain is on the cytoplasmic side. Ser436 is subject to Phosphoserine. A helical transmembrane segment spans residues 476 to 493 (VALAITFSAISFSTVYFV). Topologically, residues 494–510 (NMTVEYKYSRPPYNFKP) are extracellular. Residues 511–532 (LYIGLLYIPNSVTYFFASIYGG) traverse the membrane as a helical segment. Residues 533 to 558 (RWVDMLLKRYKEKYGILAPEARISWN) are Cytoplasmic-facing. A helical membrane pass occupies residues 559 to 577 (VVTSVISFPIALLIFGWCL). The Extracellular segment spans residues 578-586 (DKKCHWVTP). The chain crosses the membrane as a helical span at residues 587–609 (LIGTALFGYAAMMTIGATLSYLV). Over 610–624 (DSLPGKGATGVALNN) the chain is Cytoplasmic. A helical membrane pass occupies residues 625–642 (LIRQILAATAVFVTTPML). Over 643 to 648 (NGMGTG) the chain is Extracellular. The helical transmembrane segment at 649–668 (WAFTMLAFIVLGASSVLIIL) threads the bilayer. Over 669-689 (KKHGDYWRENYDLQKLYDKID) the chain is Cytoplasmic.

The protein belongs to the major facilitator superfamily. CAR1 family.

The protein resides in the cell membrane. Multidrug resistance transporter involved in resistance and adaptation to quinidine and to the herbicide barban (4-chloro-2-butynyl [3-chlorophenyl] carbamate). The protein is Quinidine resistance protein 3 (QDR3) of Saccharomyces cerevisiae (strain ATCC 204508 / S288c) (Baker's yeast).